The primary structure comprises 521 residues: UDP-N-acetylmuramoyl-L-alanyl-D-glutamate--2,6-diaminopimelate ligase (521 aa).

A UDP-N-acetyl-alpha-D-muramoyl-L-alanyl-D-glutamate-binding site is contributed by serine 33. 116-122 serves as a coordination point for ATP; sequence GTNGKTT. UDP-N-acetyl-alpha-D-muramoyl-L-alanyl-D-glutamate contacts are provided by residues 158 to 159, serine 185, glutamine 191, and arginine 193; that span reads TT. At lysine 225 the chain carries N6-carboxylysine. Residues arginine 409, 433–436, glycine 483, and glutamate 487 each bind meso-2,6-diaminopimelate; that span reads DNPR. The Meso-diaminopimelate recognition motif motif lies at 433–436; that stretch reads DNPR.

The protein belongs to the MurCDEF family. MurE subfamily. Mg(2+) serves as cofactor. Carboxylation is probably crucial for Mg(2+) binding and, consequently, for the gamma-phosphate positioning of ATP.

The protein resides in the cytoplasm. It catalyses the reaction UDP-N-acetyl-alpha-D-muramoyl-L-alanyl-D-glutamate + meso-2,6-diaminopimelate + ATP = UDP-N-acetyl-alpha-D-muramoyl-L-alanyl-gamma-D-glutamyl-meso-2,6-diaminopimelate + ADP + phosphate + H(+). Its pathway is cell wall biogenesis; peptidoglycan biosynthesis. In terms of biological role, catalyzes the addition of meso-diaminopimelic acid to the nucleotide precursor UDP-N-acetylmuramoyl-L-alanyl-D-glutamate (UMAG) in the biosynthesis of bacterial cell-wall peptidoglycan. This is UDP-N-acetylmuramoyl-L-alanyl-D-glutamate--2,6-diaminopimelate ligase from Nitrosomonas europaea (strain ATCC 19718 / CIP 103999 / KCTC 2705 / NBRC 14298).